Reading from the N-terminus, the 1164-residue chain is DNA-directed RNA polymerase subunit beta (1164 aa).

The protein belongs to the RNA polymerase beta chain family. In terms of assembly, the RNAP catalytic core consists of 2 alpha, 1 beta, 1 beta' and 1 omega subunit. When a sigma factor is associated with the core the holoenzyme is formed, which can initiate transcription.

The enzyme catalyses RNA(n) + a ribonucleoside 5'-triphosphate = RNA(n+1) + diphosphate. Its function is as follows. DNA-dependent RNA polymerase catalyzes the transcription of DNA into RNA using the four ribonucleoside triphosphates as substrates. In Saccharopolyspora erythraea (strain ATCC 11635 / DSM 40517 / JCM 4748 / NBRC 13426 / NCIMB 8594 / NRRL 2338), this protein is DNA-directed RNA polymerase subunit beta.